A 320-amino-acid polypeptide reads, in one-letter code: o-succinylbenzoate synthase (320 aa).

K133 acts as the Proton donor in catalysis. The Mg(2+) site is built by D161, E190, and D213. K235 serves as the catalytic Proton acceptor.

This sequence belongs to the mandelate racemase/muconate lactonizing enzyme family. MenC type 1 subfamily. A divalent metal cation is required as a cofactor.

It carries out the reaction (1R,6R)-6-hydroxy-2-succinyl-cyclohexa-2,4-diene-1-carboxylate = 2-succinylbenzoate + H2O. The protein operates within quinol/quinone metabolism; 1,4-dihydroxy-2-naphthoate biosynthesis; 1,4-dihydroxy-2-naphthoate from chorismate: step 4/7. It participates in quinol/quinone metabolism; menaquinone biosynthesis. Its function is as follows. Converts 2-succinyl-6-hydroxy-2,4-cyclohexadiene-1-carboxylate (SHCHC) to 2-succinylbenzoate (OSB). The polypeptide is o-succinylbenzoate synthase (Escherichia coli O6:H1 (strain CFT073 / ATCC 700928 / UPEC)).